A 328-amino-acid chain; its full sequence is Arylacetonitrilase (328 aa).

In terms of domain architecture, CN hydrolase spans 5–278; sequence VRVAVTQAEP…EGIIYADLDF (274 aa). Glu45 serves as the catalytic Proton acceptor. Lys125 is a catalytic residue. The active-site Nucleophile is Cys160.

It belongs to the carbon-nitrogen hydrolase superfamily. Nitrilase family.

The enzyme catalyses a nitrile + 2 H2O = a carboxylate + NH4(+). It catalyses the reaction 4-chlorophenylacetonitrile + 2 H2O = 4-chlorophenylacetate + NH4(+). Its function is as follows. Nitrilase that hydrolyzes preferentially phenylacetonitrile, (R,S)-mandelonitrile, and 3-indolylacetonitrile. In Aspergillus niger (strain ATCC MYA-4892 / CBS 513.88 / FGSC A1513), this protein is Arylacetonitrilase.